The following is a 375-amino-acid chain: Hydrogenase-1 small chain (375 aa).

A signal peptide (tat-type signal) is located at residues 1–47 (MNTNNEETFYQAMRRKGVSRRSFLKYCSLAATSLGLGAAMTPRIAWA). 8 residues coordinate [4Fe-4S] cluster: C64, C67, C162, C196, H234, C237, C262, and C268. Positions 277, 296, and 299 each coordinate [3Fe-4S] cluster. The interval 353 to 375 (HNRHKQQLADAGQQSPDNEDKQA) is disordered.

Belongs to the [NiFe]/[NiFeSe] hydrogenase small subunit family. In terms of assembly, heterodimer of a large and a small subunit. [4Fe-4S] cluster serves as cofactor. Requires [3Fe-4S] cluster as cofactor. Predicted to be exported by the Tat system. The position of the signal peptide cleavage has not been experimentally proven.

It localises to the cell membrane. It carries out the reaction H2 + A = AH2. The sequence is that of Hydrogenase-1 small chain (hyaA) from Citrobacter freundii.